The primary structure comprises 459 residues: MHNIHRRHFLKAAGAVTAGLVTANIALNANASSVAPKPSSGKSVIGLIAPKMEVVRVGFIGVGERGFSHVEQFCHLEGVELKAICDTHQAVVDRAVEHIVKQKRPKPAVYTGNDLSYRELLNRDDIDIVIISTPWEWHAPMAIDTMESGKHAFVEVPLALTVEECWQIIDTAERTQKNCMMMENVNYGREELMVLNMVRQGLFGELLHGEAAYIHELRWQMKEINHKTGSWRTYWHTKRNGNLYPTHGLGPVSQYMNINRGDRFDYLTSMSSPALGRALYAKREFPADHERNQLKYINGDMSTSLIKTVKGRTIMVQHDTTTPRPYSRHNLIQGTNGVFAGFPNRIAVENDGFGTSYHKWDTDMQKWYDKYDHPLWQRIGKEAEINGGHGGMDFVMLWRMVYCLRNGEALDQDVYDGASWSVVNILSEQSLNNRSNSVNFPDFTRGAWEHAKPLGIVGA.

The tat-type signal signal peptide spans 1 to 31 (MHNIHRRHFLKAAGAVTAGLVTANIALNANA). NAD(+) contacts are provided by residues 64–65 (ER), aspartate 86, 135–138 (WEWH), 155–156 (EV), and asparagine 184. Residues tyrosine 213, arginine 232, 244–247 (YPTH), and tyrosine 326 each bind substrate. Residue tyrosine 244 participates in NAD(+) binding.

Belongs to the Gfo/Idh/MocA family. Glycosyl hydrolase 109 subfamily. NAD(+) is required as a cofactor. Post-translationally, predicted to be exported by the Tat system. The position of the signal peptide cleavage has not been experimentally proven.

It catalyses the reaction Cleavage of non-reducing alpha-(1-&gt;3)-N-acetylgalactosamine residues from human blood group A and AB mucin glycoproteins, Forssman hapten and blood group A lacto series glycolipids.. In terms of biological role, glycosidase that has specific alpha-N-acetylgalactosaminidase activity. This is Alpha-N-acetylgalactosaminidase (nagA) from Shewanella oneidensis (strain ATCC 700550 / JCM 31522 / CIP 106686 / LMG 19005 / NCIMB 14063 / MR-1).